Here is a 756-residue protein sequence, read N- to C-terminus: Cellulose synthase catalytic subunit [UDP-forming] (756 aa).

A run of 4 helical transmembrane segments spans residues 27–47 (ASYI…TVTL), 49–69 (NNEQ…VGRG), 106–126 (GILG…LFLS), and 167–187 (LTVL…VYIL). The segment at 147-242 (DWPTVDIFIP…YILILDCDHI (96 aa)) is catalytic subdomain A. Aspartate 189 is an active-site residue. Residues aspartate 238 and aspartate 240 each contribute to the substrate site. The interval 319–379 (EAIESIGGFA…GQRMRWARGM (61 aa)) is catalytic subdomain B. Residue aspartate 335 is part of the active site. The next 5 membrane-spanning stretches (helical) occupy residues 409 to 429 (FFFA…LFAG), 432 to 452 (IIAA…FHSI), 470 to 490 (VYET…LLFP), 517 to 537 (NIIF…ELIV), and 551 to 571 (LLNC…IAVG). In terms of domain architecture, PilZ spans 576–681 (QVRYNHRVEA…ERDIVRFVFG (106 aa)). Residues 721–756 (NSRPKKKPLALPVERREPTTIHSGQTQEGKISRAAS) are disordered. Residues 740 to 756 (TIHSGQTQEGKISRAAS) show a composition bias toward polar residues.

It belongs to the glycosyltransferase 2 family. The cofactor is Mg(2+).

The protein localises to the cell inner membrane. It catalyses the reaction [(1-&gt;4)-beta-D-glucosyl](n) + UDP-alpha-D-glucose = [(1-&gt;4)-beta-D-glucosyl](n+1) + UDP + H(+). It functions in the pathway glycan metabolism; bacterial cellulose biosynthesis. With respect to regulation, activated by bis-(3'-5') cyclic diguanylic acid (c-di-GMP). Functionally, catalytic subunit of cellulose synthase. It polymerizes uridine 5'-diphosphate glucose to cellulose. The thick cellulosic mats generated by this enzyme probably provide a specialized protective environment to the bacterium. This chain is Cellulose synthase catalytic subunit [UDP-forming] (bcsA), found in Komagataeibacter sucrofermentans (strain ATCC 700178 / DSM 15973 / CECT 7291 / JCM 9730 / LMG 18788 / BPR 2001) (Acetobacter xylinus subsp. sucrofermentans).